A 126-amino-acid chain; its full sequence is Glycine cleavage system H protein (126 aa).

Residues 22-104 (TVTIGVTDFA…YGEGWMIKIK (83 aa)) enclose the Lipoyl-binding domain. Residue lysine 63 is modified to N6-lipoyllysine.

The protein belongs to the GcvH family. The glycine cleavage system is composed of four proteins: P, T, L and H. (R)-lipoate is required as a cofactor.

The glycine cleavage system catalyzes the degradation of glycine. The H protein shuttles the methylamine group of glycine from the P protein to the T protein. The polypeptide is Glycine cleavage system H protein (Christiangramia forsetii (strain DSM 17595 / CGMCC 1.15422 / KT0803) (Gramella forsetii)).